Consider the following 367-residue polypeptide: Anhydro-N-acetylmuramic acid kinase (367 aa).

Glycine 11–aspartate 18 contacts ATP.

This sequence belongs to the anhydro-N-acetylmuramic acid kinase family.

The catalysed reaction is 1,6-anhydro-N-acetyl-beta-muramate + ATP + H2O = N-acetyl-D-muramate 6-phosphate + ADP + H(+). It participates in amino-sugar metabolism; 1,6-anhydro-N-acetylmuramate degradation. It functions in the pathway cell wall biogenesis; peptidoglycan recycling. Its function is as follows. Catalyzes the specific phosphorylation of 1,6-anhydro-N-acetylmuramic acid (anhMurNAc) with the simultaneous cleavage of the 1,6-anhydro ring, generating MurNAc-6-P. Is required for the utilization of anhMurNAc either imported from the medium or derived from its own cell wall murein, and thus plays a role in cell wall recycling. The polypeptide is Anhydro-N-acetylmuramic acid kinase (Rhodopseudomonas palustris (strain ATCC BAA-98 / CGA009)).